Reading from the N-terminus, the 109-residue chain is Spermidine export protein MdtI (109 aa).

Helical transmembrane passes span 6–26 (WWHA…NILL), 36–56 (WMGI…AQAV), 63–83 (IAYA…GWIM), and 88–108 (LNYK…MIKM).

Belongs to the drug/metabolite transporter (DMT) superfamily. Small multidrug resistance (SMR) (TC 2.A.7.1) family. MdtI subfamily. In terms of assembly, forms a complex with MdtJ.

It is found in the cell inner membrane. Catalyzes the excretion of spermidine. This is Spermidine export protein MdtI from Photorhabdus laumondii subsp. laumondii (strain DSM 15139 / CIP 105565 / TT01) (Photorhabdus luminescens subsp. laumondii).